Reading from the N-terminus, the 321-residue chain is MEKSLLFHFRRIGVEFIIFSVYAVFSISWAATGSLMPLISNDLALNTQQATLITSMIVVAKIFGASFTAFLVYKFGLKKGYFLGCILMSSGIFLSFVDSYSGILIIRFLTGLGSACALVCLVPIAQQWFEKKALHFVISFNITSNLVGITLGLVLAESISNYFGNWRDSLSFYAWINLILLILWLFVGKDENKKEEKKNNAKDLIYALKSRVTWGMIIFYIGPILFLNSLFTFLPTFYAQYAGFSKELADFAKKEIPALANFAIIFGPYLGLFFKRKNISFKIMLLSGGACIFICGFCMLFLQNLVLIQIFAVLSGIFYSM.

9 consecutive transmembrane segments (helical) span residues 12 to 32, 52 to 72, 86 to 106, 109 to 129, 136 to 156, 168 to 188, 214 to 234, 254 to 274, and 292 to 312; these read IGVE…WAAT, LITS…AFLV, ILMS…ILII, LTGL…QQWF, FVIS…LVLA, DSLS…LFVG, WGMI…FTFL, KEIP…GLFF, and IFIC…QIFA.

It is found in the cell membrane. This is an uncharacterized protein from Campylobacter jejuni subsp. jejuni serotype O:2 (strain ATCC 700819 / NCTC 11168).